The following is an 81-amino-acid chain: MVKKEAVRTDSTEDNSVDNVQARSNFIAATKDELAKVVWPSRQQLISESVAVILMVILVSTVIYFVDQIFGWITKQPFLFG.

The chain crosses the membrane as a helical span at residues 50-70 (VAVILMVILVSTVIYFVDQIF).

It belongs to the SecE/SEC61-gamma family. As to quaternary structure, component of the Sec protein translocase complex. Heterotrimer consisting of SecY, SecE and SecG subunits. The heterotrimers can form oligomers, although 1 heterotrimer is thought to be able to translocate proteins. Interacts with the ribosome. Interacts with SecDF, and other proteins may be involved. Interacts with SecA.

Its subcellular location is the cell inner membrane. It is found in the cellular thylakoid membrane. Functionally, essential subunit of the Sec protein translocation channel SecYEG. Clamps together the 2 halves of SecY. May contact the channel plug during translocation. The polypeptide is Protein translocase subunit SecE (Synechocystis sp. (strain ATCC 27184 / PCC 6803 / Kazusa)).